The chain runs to 623 residues: Arginine--tRNA ligase (623 aa).

Residues 116–126 carry the 'HIGH' region motif; that stretch reads ANPIHPLHVGH.

The protein belongs to the class-I aminoacyl-tRNA synthetase family.

It localises to the cytoplasm. It catalyses the reaction tRNA(Arg) + L-arginine + ATP = L-arginyl-tRNA(Arg) + AMP + diphosphate. In Sulfurisphaera tokodaii (strain DSM 16993 / JCM 10545 / NBRC 100140 / 7) (Sulfolobus tokodaii), this protein is Arginine--tRNA ligase.